A 382-amino-acid chain; its full sequence is Probable dual-specificity RNA methyltransferase RlmN (382 aa).

Glu-118 functions as the Proton acceptor in the catalytic mechanism. The region spanning 124–370 (YDKRVTMCIS…TTVRDTRGSD (247 aa)) is the Radical SAM core domain. Cys-131 and Cys-375 form a disulfide bridge. [4Fe-4S] cluster-binding residues include Cys-138, Cys-142, and Cys-145. S-adenosyl-L-methionine is bound by residues 196 to 197 (GE), Ser-230, 253 to 255 (SLH), and Asn-332. Catalysis depends on Cys-375, which acts as the S-methylcysteine intermediate.

Belongs to the radical SAM superfamily. RlmN family. Requires [4Fe-4S] cluster as cofactor.

Its subcellular location is the cytoplasm. The enzyme catalyses adenosine(2503) in 23S rRNA + 2 reduced [2Fe-2S]-[ferredoxin] + 2 S-adenosyl-L-methionine = 2-methyladenosine(2503) in 23S rRNA + 5'-deoxyadenosine + L-methionine + 2 oxidized [2Fe-2S]-[ferredoxin] + S-adenosyl-L-homocysteine. It catalyses the reaction adenosine(37) in tRNA + 2 reduced [2Fe-2S]-[ferredoxin] + 2 S-adenosyl-L-methionine = 2-methyladenosine(37) in tRNA + 5'-deoxyadenosine + L-methionine + 2 oxidized [2Fe-2S]-[ferredoxin] + S-adenosyl-L-homocysteine. In terms of biological role, specifically methylates position 2 of adenine 2503 in 23S rRNA and position 2 of adenine 37 in tRNAs. The sequence is that of Probable dual-specificity RNA methyltransferase RlmN from Kocuria rhizophila (strain ATCC 9341 / DSM 348 / NBRC 103217 / DC2201).